The chain runs to 209 residues: Ribosomal RNA large subunit methyltransferase E (209 aa).

Residues G63, W65, D83, D99, and D124 each contribute to the S-adenosyl-L-methionine site. K164 functions as the Proton acceptor in the catalytic mechanism.

Belongs to the class I-like SAM-binding methyltransferase superfamily. RNA methyltransferase RlmE family.

It localises to the cytoplasm. It carries out the reaction uridine(2552) in 23S rRNA + S-adenosyl-L-methionine = 2'-O-methyluridine(2552) in 23S rRNA + S-adenosyl-L-homocysteine + H(+). Specifically methylates the uridine in position 2552 of 23S rRNA at the 2'-O position of the ribose in the fully assembled 50S ribosomal subunit. This chain is Ribosomal RNA large subunit methyltransferase E, found in Proteus mirabilis (strain HI4320).